Here is a 232-residue protein sequence, read N- to C-terminus: Ribose-5-phosphate isomerase A (232 aa).

Substrate is bound by residues 34–37 (TGST), 89–92 (DGAD), and 102–105 (KGGG). E111 functions as the Proton acceptor in the catalytic mechanism. K129 lines the substrate pocket.

The protein belongs to the ribose 5-phosphate isomerase family. As to quaternary structure, homodimer.

It catalyses the reaction aldehydo-D-ribose 5-phosphate = D-ribulose 5-phosphate. It participates in carbohydrate degradation; pentose phosphate pathway; D-ribose 5-phosphate from D-ribulose 5-phosphate (non-oxidative stage): step 1/1. Its function is as follows. Catalyzes the reversible conversion of ribose-5-phosphate to ribulose 5-phosphate. This chain is Ribose-5-phosphate isomerase A, found in Protochlamydia amoebophila (strain UWE25).